The sequence spans 80 residues: RNA-binding protein Hfq (80 aa).

The Sm domain maps to 9–69 (DVFLNQVRKE…VSTISPNSPV (61 aa)).

The protein belongs to the Hfq family. In terms of assembly, homohexamer.

RNA chaperone that binds small regulatory RNA (sRNAs) and mRNAs to facilitate mRNA translational regulation in response to envelope stress, environmental stress and changes in metabolite concentrations. Also binds with high specificity to tRNAs. The chain is RNA-binding protein Hfq from Alkaliphilus oremlandii (strain OhILAs) (Clostridium oremlandii (strain OhILAs)).